A 255-amino-acid polypeptide reads, in one-letter code: Testis-specific H1 histone (255 aa).

The segment at 1–54 is disordered; it reads MEQALTGEAQSRWPRRGGSGAMAEAPGPSGESRGHSATQLPAEKTVGGPSRGCS. Position 56 is a phosphoserine (serine 56). Residues 124–134 show a composition bias toward basic residues; that stretch reads KVPKPRRKPGR. Positions 124–255 are disordered; that stretch reads KVPKPRRKPG…PKKPAQRTIQ (132 aa). Residues 142 to 152 are compositionally biased toward low complexity; sequence RAPWRTPAAPR. Basic residues-rich tracts occupy residues 153-166 and 174-194; these read SSRR…KAAR and RNAR…RARP. Composition is skewed to basic and acidic residues over residues 195–230 and 238–248; these read RAKE…PRSG and KPREEKQEPKK.

It belongs to the histone H1/H5 family. Testis-specific.

It is found in the nucleus. It localises to the chromosome. Functionally, essential for normal spermatogenesis and male fertility. Required for proper cell restructuring and DNA condensation during the elongation phase of spermiogenesis. Involved in the histone-protamine transition of sperm chromatin and the subsequent production of functional sperm. Binds both double-stranded and single-stranded DNA, ATP and protamine-1. The protein is Testis-specific H1 histone of Homo sapiens (Human).